The following is a 339-amino-acid chain: Dihydroorotase (339 aa).

Residues His-12 and His-14 each coordinate Zn(2+). Substrate-binding positions include 14–16 and Asn-40; that span reads HVR. Lys-94, His-133, His-167, and Asp-239 together coordinate Zn(2+). Lys-94 carries the post-translational modification N6-carboxylysine. His-133 is a binding site for substrate. Asp-239 is a catalytic residue. 2 residues coordinate substrate: His-243 and Ala-255.

This sequence belongs to the metallo-dependent hydrolases superfamily. DHOase family. Class II DHOase subfamily. Homodimer. The cofactor is Zn(2+).

The enzyme catalyses (S)-dihydroorotate + H2O = N-carbamoyl-L-aspartate + H(+). Its pathway is pyrimidine metabolism; UMP biosynthesis via de novo pathway; (S)-dihydroorotate from bicarbonate: step 3/3. Catalyzes the reversible cyclization of carbamoyl aspartate to dihydroorotate. This chain is Dihydroorotase, found in Helicobacter pylori (strain G27).